Consider the following 413-residue polypeptide: L-arginine-specific L-amino acid ligase (413 aa).

In terms of domain architecture, ATP-grasp spans 115-312 (KTKLKMEGIP…LWESSLNISV (198 aa)). Residue 141–202 (GEKLGWPIIV…EKCIEMEEFH (62 aa)) coordinates ATP. Mg(2+) is bound by residues Glu-268 and Glu-281. The Mn(2+) site is built by Glu-268 and Glu-281.

Homodimer. It depends on Mg(2+) as a cofactor. Mn(2+) serves as cofactor. The cofactor is Co(2+).

It catalyses the reaction an L-alpha-amino acid + L-arginine + ATP = L-arginyl-L-alpha-amino acid + ADP + phosphate + H(+). Catalyzes the synthesis of Arg-Xaa dipeptides in an ATP-dependent manner. Has strict specificity toward arginine as the N-terminal substrate. The polypeptide is L-arginine-specific L-amino acid ligase (Bacillus subtilis).